The sequence spans 380 residues: MKHLTEEQKLTLDMVRDVATREIAPRALELDEKSLFPEYARDLFAKLGLLNPLLPAAYGGTEMGVLTLALILEELGRVCASTALLLIAQTDGMLPIIHGGSPELKERYLRRFAGESTLLTALAATEPAAGSDLLAMKTRAVRQGDKYVINGQKCFITNGSVADVIVVYAYTDPEKGSKGISAFVVEKGTPGLVYGRNESKMGMRGSINSELFFENMEVPAENIIGAEGTGFANLMQTLSTNRVFCAAQAVGIAQGALDIAVRHTQDRVQFGKPIAHLAPVQFMVADMATAVEASRLLTRKAAELLDDGDKKAVLYGSMAKTMASDTAMRVTTDAVQVLGGSGYMKENGVERMMRDAKLTQIYTGTNQITRMVTGRALLFP.

The active-site Proton acceptor is Asp-91. Leu-122, Ala-124, Thr-125, Ser-131, and Thr-157 together coordinate FAD. Residue Ser-131 coordinates cyclohex-1-ene-1-carbonyl-CoA. Residue Ser-131 participates in cyclohexa-1,5-diene-1-carbonyl-CoA binding. The cyclohex-1-ene-1-carbonyl-CoA site is built by Lys-178, Arg-242, and Thr-363. Cyclohexa-1,5-diene-1-carbonyl-CoA contacts are provided by Lys-178, Arg-242, and Thr-363. FAD contacts are provided by Thr-365 and Gln-367. Arg-375 provides a ligand contact to cyclohex-1-ene-1-carbonyl-CoA. Arg-375 lines the cyclohexa-1,5-diene-1-carbonyl-CoA pocket.

It belongs to the acyl-CoA dehydrogenase family. In terms of assembly, homotetramer. It depends on FAD as a cofactor.

The enzyme catalyses cyclohex-1-ene-1-carbonyl-CoA + oxidized [electron-transfer flavoprotein] + H(+) = cyclohexa-1,5-diene-1-carbonyl-CoA + reduced [electron-transfer flavoprotein]. Acyl-CoA dehydrogenase involved in the anaerobic degradation of cyclohexane carboxylic acid (CHC). Catalyzes the 1,4-dehydrogenation at C3 and C6 of cyclohex-1-ene-1-carbonyl-CoA (CHeneCoA or Ch1CoA) to cyclohexa-1,5-diene-1-carbonyl-CoA (CHdieneCoA or Ch1,5CoA). Also able to catalyze, at a lower rate, the dehydrogenation at C3 and C4 of CHdieneCoA to benzoyl-CoA. The chain is Cyclohex-1-ene-1-carbonyl-CoA dehydrogenase from Geobacter metallireducens (strain ATCC 53774 / DSM 7210 / GS-15).